A 452-amino-acid chain; its full sequence is 2-succinylbenzoate--CoA ligase (452 aa).

Belongs to the ATP-dependent AMP-binding enzyme family. MenE subfamily.

It catalyses the reaction 2-succinylbenzoate + ATP + CoA = 2-succinylbenzoyl-CoA + AMP + diphosphate. It participates in quinol/quinone metabolism; 1,4-dihydroxy-2-naphthoate biosynthesis; 1,4-dihydroxy-2-naphthoate from chorismate: step 5/7. The protein operates within quinol/quinone metabolism; menaquinone biosynthesis. In terms of biological role, converts 2-succinylbenzoate (OSB) to 2-succinylbenzoyl-CoA (OSB-CoA). In Haemophilus influenzae (strain ATCC 51907 / DSM 11121 / KW20 / Rd), this protein is 2-succinylbenzoate--CoA ligase.